The sequence spans 449 residues: POU domain, class 3, transcription factor 1 (449 aa).

5 disordered regions span residues 1–22 (MATT…TGPL), 76–108 (GGGG…GGGG), 132–152 (AHHL…HQPQ), 184–251 (GLHH…PSSD), and 393–449 (KRMT…GSVQ). Gly residues-rich tracts occupy residues 11-20 (GPGGGAGGTG) and 93-108 (AGGG…GGGG). Residues 132–143 (AHHLGPAMSPSP) show a composition bias toward low complexity. Residues 188 to 197 (ALHEDGHEAQ) show a composition bias toward basic and acidic residues. Positions 218–230 (AGGLHAAAAHLHP) are enriched in low complexity. Positions 245-319 (EDAPSSDDLE…LLNKWLEETD (75 aa)) constitute a POU-specific domain. Residues 337 to 396 (KRKKRTSIEVGVKGALESHFLKCPKPSAHEITGLADSLQLEKEVVRVWFCNRRQKEKRMT) constitute a DNA-binding region (homeobox). Positions 425–434 (PSAPPPPPPA) are enriched in pro residues.

The protein belongs to the POU transcription factor family. Class-3 subfamily.

It is found in the nucleus. Transcription factor that binds to the octamer motif (5'-ATTTGCAT-3'). Acts as a transcriptional activator when binding cooperatively with SOX4, SOX11, or SOX12 to gene promoters. Acts as a transcriptional repressor of myelin-specific genes. The polypeptide is POU domain, class 3, transcription factor 1 (Pou3f1) (Mus musculus (Mouse)).